The chain runs to 476 residues: Bifunctional protein HldE (476 aa).

The segment at methionine 1–serine 319 is ribokinase. Asparagine 195–glutamate 198 provides a ligand contact to ATP. The active site involves aspartate 264. Residues methionine 345–glutamine 476 form a cytidylyltransferase region.

This sequence in the N-terminal section; belongs to the carbohydrate kinase PfkB family. In the C-terminal section; belongs to the cytidylyltransferase family. As to quaternary structure, homodimer.

It catalyses the reaction D-glycero-beta-D-manno-heptose 7-phosphate + ATP = D-glycero-beta-D-manno-heptose 1,7-bisphosphate + ADP + H(+). The catalysed reaction is D-glycero-beta-D-manno-heptose 1-phosphate + ATP + H(+) = ADP-D-glycero-beta-D-manno-heptose + diphosphate. The protein operates within nucleotide-sugar biosynthesis; ADP-L-glycero-beta-D-manno-heptose biosynthesis; ADP-L-glycero-beta-D-manno-heptose from D-glycero-beta-D-manno-heptose 7-phosphate: step 1/4. Its pathway is nucleotide-sugar biosynthesis; ADP-L-glycero-beta-D-manno-heptose biosynthesis; ADP-L-glycero-beta-D-manno-heptose from D-glycero-beta-D-manno-heptose 7-phosphate: step 3/4. In terms of biological role, catalyzes the phosphorylation of D-glycero-D-manno-heptose 7-phosphate at the C-1 position to selectively form D-glycero-beta-D-manno-heptose-1,7-bisphosphate. Functionally, catalyzes the ADP transfer from ATP to D-glycero-beta-D-manno-heptose 1-phosphate, yielding ADP-D-glycero-beta-D-manno-heptose. In Shewanella baltica (strain OS155 / ATCC BAA-1091), this protein is Bifunctional protein HldE.